Here is a 401-residue protein sequence, read N- to C-terminus: Argininosuccinate synthase (401 aa).

ATP contacts are provided by residues 10–18 (AYSGGVDTS) and alanine 38. Tyrosine 89 lines the L-citrulline pocket. Glycine 119 serves as a coordination point for ATP. 3 residues coordinate L-aspartate: threonine 121, asparagine 125, and aspartate 126. Residue asparagine 125 participates in L-citrulline binding. Positions 129, 177, 186, 262, and 274 each coordinate L-citrulline.

The protein belongs to the argininosuccinate synthase family. Type 1 subfamily. In terms of assembly, homotetramer.

It is found in the cytoplasm. It carries out the reaction L-citrulline + L-aspartate + ATP = 2-(N(omega)-L-arginino)succinate + AMP + diphosphate + H(+). Its pathway is amino-acid biosynthesis; L-arginine biosynthesis; L-arginine from L-ornithine and carbamoyl phosphate: step 2/3. The protein is Argininosuccinate synthase of Synechococcus sp. (strain CC9311).